A 179-amino-acid polypeptide reads, in one-letter code: MGKIKVGVVTARWNQEITSKLEEGAISYLEACEDVEIFAALVPGAVEIPLACQAFLEAGCDGVVALGVVIRGDTSHYDYVCNSVTDGVTRLMLDYKKPIGFGVLTTENEEQALARAGGDHGNKGEEAAQVTMEMIGLTQEIPAAMKTALMLAKKAPAKAAKKPAKAAAKTQKKKKKVRK.

Residues tryptophan 13, 45 to 47, and 68 to 70 contribute to the 5-amino-6-(D-ribitylamino)uracil site; these read AVE and VVI. 73-74 contributes to the (2S)-2-hydroxy-3-oxobutyl phosphate binding site; the sequence is DT. The Proton donor role is filled by histidine 76. Position 101 (phenylalanine 101) interacts with 5-amino-6-(D-ribitylamino)uracil. Position 115 (arginine 115) interacts with (2S)-2-hydroxy-3-oxobutyl phosphate. The interval 157–179 is disordered; that stretch reads AKAAKKPAKAAAKTQKKKKKVRK.

Belongs to the DMRL synthase family.

The catalysed reaction is (2S)-2-hydroxy-3-oxobutyl phosphate + 5-amino-6-(D-ribitylamino)uracil = 6,7-dimethyl-8-(1-D-ribityl)lumazine + phosphate + 2 H2O + H(+). It functions in the pathway cofactor biosynthesis; riboflavin biosynthesis; riboflavin from 2-hydroxy-3-oxobutyl phosphate and 5-amino-6-(D-ribitylamino)uracil: step 1/2. Functionally, catalyzes the formation of 6,7-dimethyl-8-ribityllumazine by condensation of 5-amino-6-(D-ribitylamino)uracil with 3,4-dihydroxy-2-butanone 4-phosphate. This is the penultimate step in the biosynthesis of riboflavin. This chain is 6,7-dimethyl-8-ribityllumazine synthase, found in Bdellovibrio bacteriovorus (strain ATCC 15356 / DSM 50701 / NCIMB 9529 / HD100).